The chain runs to 235 residues: MEPKYWNINLEEMMEAGVHSGHQARKWNPKMAPYIFAERKGIHIINLTRTARFSSEACDSVANVASEGKQFSMVGTKYQAADLTASAAIKARCHYVNKKWLGGMLTNWSTMEKRLQKLRDLENKEKTGGFDRLPEKEAAISKGQLAKLKKYLGGIEYMASLPDVVTIVDQREESIAIKECITLNIPTICLVDTDCDPDLADIPIPANDDARASIRWISDKLASAICEGRKSYMKD.

It belongs to the universal ribosomal protein uS2 family.

The protein localises to the plastid. It localises to the chloroplast. The protein is Small ribosomal subunit protein uS2c (rps2) of Huperzia lucidula (Shining clubmoss).